The primary structure comprises 312 residues: Malate dehydrogenase (312 aa).

NAD(+) contacts are provided by residues 7–13 (GAAGGIG) and aspartate 34. The substrate site is built by arginine 81 and arginine 87. Residues asparagine 94 and 117-119 (ITN) contribute to the NAD(+) site. Substrate contacts are provided by asparagine 119 and arginine 153. The Proton acceptor role is filled by histidine 177. Methionine 227 is an NAD(+) binding site.

Belongs to the LDH/MDH superfamily. MDH type 1 family. Homodimer.

The enzyme catalyses (S)-malate + NAD(+) = oxaloacetate + NADH + H(+). Catalyzes the reversible oxidation of malate to oxaloacetate. The sequence is that of Malate dehydrogenase from Enterobacter sp. (strain 638).